The chain runs to 428 residues: Cell division protein FtsZ (428 aa).

GTP contacts are provided by residues 73 to 77, 160 to 162, Glu-191, Arg-195, and Asp-239; these read GGGGN and GTG. The interval 378 to 428 is disordered; the sequence is NAANARVVSAPPKRTPTQTPLTNSPAPTPEPKEKSGLDIPDFLQRRRPPKN. Polar residues predominate over residues 392 to 402; that stretch reads TPTQTPLTNSP.

Belongs to the FtsZ family. As to quaternary structure, homodimer. Polymerizes to form a dynamic ring structure in a strictly GTP-dependent manner. Interacts directly with several other division proteins.

The protein resides in the cytoplasm. Functionally, essential cell division protein that forms a contractile ring structure (Z ring) at the future cell division site. The regulation of the ring assembly controls the timing and the location of cell division. One of the functions of the FtsZ ring is to recruit other cell division proteins to the septum to produce a new cell wall between the dividing cells. Binds GTP and shows GTPase activity. This is Cell division protein FtsZ from Nostoc sp. (strain PCC 7120 / SAG 25.82 / UTEX 2576).